A 147-amino-acid polypeptide reads, in one-letter code: Hemoglobin subunit epsilon (147 aa).

The 145-residue stretch at 3–147 (HLTAEEKSSV…VATALAHKYH (145 aa)) folds into the Globin domain. Ser14 and Ser51 each carry phosphoserine. Heme b contacts are provided by His64 and His93.

It belongs to the globin family. As to quaternary structure, heterotetramer of two alpha chains and two epsilon chains in early embryonic hemoglobin Gower-2; two zeta chains and two epsilon chains in early embryonic hemoglobin Gower-1. Red blood cells.

Its function is as follows. The epsilon chain is a beta-type chain of early mammalian embryonic hemoglobin. In Carlito syrichta (Philippine tarsier), this protein is Hemoglobin subunit epsilon (HBE1).